Reading from the N-terminus, the 247-residue chain is Isoprenyl transferase (247 aa).

Asp-18 is a catalytic residue. Asp-18 contributes to the Mg(2+) binding site. Substrate-binding positions include 19 to 22 (GNGR), Trp-23, Arg-31, His-35, and 63 to 65 (SSE). Asn-66 functions as the Proton acceptor in the catalytic mechanism. Substrate-binding positions include Trp-67, Arg-69, Arg-186, and 192–194 (RLS). Glu-205 provides a ligand contact to Mg(2+).

The protein belongs to the UPP synthase family. In terms of assembly, homodimer. Mg(2+) serves as cofactor.

In terms of biological role, catalyzes the condensation of isopentenyl diphosphate (IPP) with allylic pyrophosphates generating different type of terpenoids. The chain is Isoprenyl transferase from Agrobacterium fabrum (strain C58 / ATCC 33970) (Agrobacterium tumefaciens (strain C58)).